The chain runs to 127 residues: Holo-[acyl-carrier-protein] synthase (127 aa).

Residues Asp-8 and Glu-56 each contribute to the Mg(2+) site.

Belongs to the P-Pant transferase superfamily. AcpS family. Requires Mg(2+) as cofactor.

It localises to the cytoplasm. The enzyme catalyses apo-[ACP] + CoA = holo-[ACP] + adenosine 3',5'-bisphosphate + H(+). In terms of biological role, transfers the 4'-phosphopantetheine moiety from coenzyme A to a Ser of acyl-carrier-protein. This chain is Holo-[acyl-carrier-protein] synthase, found in Caldanaerobacter subterraneus subsp. tengcongensis (strain DSM 15242 / JCM 11007 / NBRC 100824 / MB4) (Thermoanaerobacter tengcongensis).